We begin with the raw amino-acid sequence, 571 residues long: Zinc metalloproteinase-disintegrin-like jararhagin (571 aa).

The propeptide occupies 1–150 (ATRPKGAVQP…KKASQLAFTA (150 aa)). Glu-151 is modified (pyrrolidone carboxylic acid (Glu)). The Peptidase M12B domain maps to 159–355 (KYIEFFVVVD…HNPECIINEP (197 aa)). Residues Glu-162 and Asp-246 each contribute to the Ca(2+) site. 3 cysteine pairs are disulfide-bonded: Cys-270–Cys-350, Cys-310–Cys-334, and Cys-312–Cys-317. Residue His-295 participates in Zn(2+) binding. The active site involves Glu-296. His-299 and His-305 together coordinate Zn(2+). Asn-333 carries an N-linked (GlcNAc...) asparagine glycan. Ca(2+) is bound by residues Cys-350, Asn-353, Val-365, Asn-368, Leu-370, Glu-372, Glu-375, and Asp-378. The region spanning 363-449 (PPVCGNELLE…ECPADVFHKN (87 aa)) is the Disintegrin domain. 22 cysteine pairs are disulfide-bonded: Cys-366-Cys-385, Cys-366-Cys-395, Cys-377-Cys-390, Cys-377-Cys-395, Cys-379-Cys-385, Cys-389-Cys-412, Cys-403-Cys-409, Cys-408-Cys-434, Cys-421-Cys-441, Cys-428-Cys-453, Cys-428-Cys-460, Cys-453-Cys-465, Cys-460-Cys-465, Cys-472-Cys-487, Cys-472-Cys-522, Cys-487-Cys-533, Cys-500-Cys-510, Cys-510-Cys-517, Cys-517-Cys-559, Cys-522-Cys-533, Cys-553-Cys-564, and Cys-559-Cys-564. Residues 427 to 429 (ECD) carry the D/ECD-tripeptide motif. Ca(2+)-binding residues include Asp-429, Pro-430, Glu-432, Asp-444, and Val-445.

This sequence belongs to the venom metalloproteinase (M12B) family. P-III subfamily. P-IIIb sub-subfamily. In terms of assembly, monomer (Jararhagin and Jararhagin-C) and dimer (Jaracetin). Requires Zn(2+) as cofactor. In terms of processing, the N-terminus of Jararhagin is blocked. As to expression, expressed by the venom gland.

It localises to the secreted. It catalyses the reaction Cleavage of 10-His-|-Leu-11, 14-Ala-|-Leu-15, 16-Tyr-|-Leu-17 and 24-Phe-|-Phe-25 bonds in insulin B chain.. Inhibited by EDTA, 1,10 phenanthroline and batimastat (a peptidomimetic MMP inhibitor). Functionally, snake venom zinc metalloproteinase-disintegrin-like jararhagin: causes hemorrhage. This is the result of the degradation of sub-endothelial matrix proteins leading to the disruption of the blood vessel endothelium, with accompanying disturbances in platelet function. It is able to degrade von Willebrand factor (vWF) and it hydrolyzes the alpha-chain of fibrinogen (FGA) while leaving the beta and gamma chains unaffected. It inhibits collagen-induced platelet aggregation through the binding to alpha-2/beta-1 integrin (ITGA2/ITGB1) (collagen receptor), and it cleaves the beta-1 subunit of the same integrin, inhibiting platelet interaction and ultimately causing impairment of signal transduction. It has inability to be affected by the plasma inhibitor alpha(2)-macroglobulin. In fibroblasts, it functions as a collagen-mimetic substrate and, in endothelial cells, it causes apoptosis and indirectly inhibits cell proliferation by release of angiostatin-like compounds. It induces a strong pro-inflammatory response characterized by intense leukocyte accumulation and release of cytokines at the site of the injection. Although hemorrhage and edema are a response to the direct effect of this toxin, jararhagin-induced inflammation and necrosis are dependent on macrophages and key pro-inflammatory cytokines or their receptors. It also possesses anti-tumorgenic properties. The monomeric form inhibits collagen- and ADP-induced platelet aggregation, but has no effect on glycoprotein Ib-IX-dependent (GP1BA/GP5/GP9) platelet agglutination. Locally activates the early events of an acute inflammatory response as leukocyte rolling and pro-inflammatory cytokine release. In terms of biological role, the dimeric form jaracetin may be a dimeric form of jararhagin-C. It binds to von Willebrand factor (VWF) and induces its interaction with GPIbalpha (GP1BA) (via the vWF A1 domain), resulting in platelet aggregation. Also binds the alpha-2 subunit of the alpha-2/beta-1 (ITGA2/ITGB1) integrin. It potently induces platelet aggregation in citrated platelet-rich plasma. The sequence is that of Zinc metalloproteinase-disintegrin-like jararhagin from Bothrops jararaca (Jararaca).